The following is a 728-amino-acid chain: Polyribonucleotide nucleotidyltransferase (728 aa).

Mg(2+) is bound by residues aspartate 489 and aspartate 495. One can recognise a KH domain in the interval 556–615 (PKIDTIKIDVDKIKIVIGKGGETIDKIIAETGVKIDIDEEGNVSIYSSDQDAINRAKEII). The S1 motif domain maps to 625-693 (DEVYHAKVVR…AKGRVDASMK (69 aa)). The interval 691 to 728 (SMKALLPRPPKPEKSDKHHDKGHPHKKHEEAPLTQTEE) is disordered. Basic and acidic residues predominate over residues 700–709 (PKPEKSDKHH).

It belongs to the polyribonucleotide nucleotidyltransferase family. Requires Mg(2+) as cofactor.

Its subcellular location is the cytoplasm. It carries out the reaction RNA(n+1) + phosphate = RNA(n) + a ribonucleoside 5'-diphosphate. Involved in mRNA degradation. Catalyzes the phosphorolysis of single-stranded polyribonucleotides processively in the 3'- to 5'-direction. The protein is Polyribonucleotide nucleotidyltransferase of Streptococcus gordonii (strain Challis / ATCC 35105 / BCRC 15272 / CH1 / DL1 / V288).